The sequence spans 397 residues: Elongation factor Tu (397 aa).

Residues 10–207 form the tr-type G domain; the sequence is KPHVNVGTIG…TLDTYIPEPE (198 aa). The segment at 19-26 is G1; that stretch reads GHVDHGKT. 19 to 26 serves as a coordination point for GTP; that stretch reads GHVDHGKT. A Mg(2+)-binding site is contributed by Thr26. The interval 60–64 is G2; that stretch reads GITIN. A G3 region spans residues 81-84; it reads DCPG. GTP-binding positions include 81–85 and 136–139; these read DCPGH and NKAD. The interval 136–139 is G4; that stretch reads NKAD. The G5 stretch occupies residues 174 to 176; sequence SAL.

The protein belongs to the TRAFAC class translation factor GTPase superfamily. Classic translation factor GTPase family. EF-Tu/EF-1A subfamily. Monomer.

The protein localises to the cytoplasm. The catalysed reaction is GTP + H2O = GDP + phosphate + H(+). Its function is as follows. GTP hydrolase that promotes the GTP-dependent binding of aminoacyl-tRNA to the A-site of ribosomes during protein biosynthesis. The chain is Elongation factor Tu from Pseudomonas fluorescens (strain ATCC BAA-477 / NRRL B-23932 / Pf-5).